The chain runs to 166 residues: Phospholipase A2 inhibitor clone 10 (166 aa).

The N-terminal stretch at 1–19 is a signal peptide; the sequence is MRLILLSSLLLLGIFLANG. One can recognise a C-type lectin domain in the interval 46–161; that stretch reads LKYSFLTVHR…CDDNLLVVCE (116 aa). Disulfide bonds link C83–C160 and C138–C152. The N-linked (GlcNAc...) asparagine glycan is linked to N122.

Belongs to the alpha-type phospholipase A2 inhibitor family. In terms of assembly, homotrimer; non-covalently linked. Expressed by the liver.

It is found in the secreted. Functionally, this phospholipase A2 inhibitor binds directly phospholipase A2 in the presence or absence of calcium. This Bothrops moojeni (Lance-headed viper) protein is Phospholipase A2 inhibitor clone 10.